The primary structure comprises 161 residues: Peroxynitrite isomerase (161 aa).

Residues Gly17–Gly23 carry the GXWXGXG motif. His152 contacts heme b.

This sequence belongs to the nitrobindin family. In terms of assembly, homodimer. It depends on heme b as a cofactor.

The enzyme catalyses peroxynitrite = nitrate. The protein operates within nitrogen metabolism. In terms of biological role, heme-binding protein able to scavenge peroxynitrite and to protect free L-tyrosine against peroxynitrite-mediated nitration, by acting as a peroxynitrite isomerase that converts peroxynitrite to nitrate. Therefore, this protein likely plays a role in peroxynitrite sensing and in the detoxification of reactive nitrogen and oxygen species (RNS and ROS, respectively). Is able to bind nitric oxide (NO) in vitro, but may act as a sensor of peroxynitrite levels in vivo. In Mycobacterium leprae (strain TN), this protein is Peroxynitrite isomerase.